The following is a 337-amino-acid chain: Ketol-acid reductoisomerase (NADP(+)) (337 aa).

Residues 3–183 (VEMFYDDDAD…GGARAGVIKT (181 aa)) form the KARI N-terminal Rossmann domain. NADP(+)-binding positions include 26–29 (YGSQ), Lys-49, Ser-52, Ser-54, and 84–87 (DTAQ). Residue His-109 is part of the active site. Gly-135 contacts NADP(+). Residues 184–329 (TFKEETETDL…KKLRDLMSWV (146 aa)) form the KARI C-terminal knotted domain. The Mg(2+) site is built by Asp-192, Glu-196, Glu-228, and Glu-232. Ser-253 provides a ligand contact to substrate.

This sequence belongs to the ketol-acid reductoisomerase family. Mg(2+) is required as a cofactor.

The catalysed reaction is (2R)-2,3-dihydroxy-3-methylbutanoate + NADP(+) = (2S)-2-acetolactate + NADPH + H(+). It carries out the reaction (2R,3R)-2,3-dihydroxy-3-methylpentanoate + NADP(+) = (S)-2-ethyl-2-hydroxy-3-oxobutanoate + NADPH + H(+). It functions in the pathway amino-acid biosynthesis; L-isoleucine biosynthesis; L-isoleucine from 2-oxobutanoate: step 2/4. The protein operates within amino-acid biosynthesis; L-valine biosynthesis; L-valine from pyruvate: step 2/4. Functionally, involved in the biosynthesis of branched-chain amino acids (BCAA). Catalyzes an alkyl-migration followed by a ketol-acid reduction of (S)-2-acetolactate (S2AL) to yield (R)-2,3-dihydroxy-isovalerate. In the isomerase reaction, S2AL is rearranged via a Mg-dependent methyl migration to produce 3-hydroxy-3-methyl-2-ketobutyrate (HMKB). In the reductase reaction, this 2-ketoacid undergoes a metal-dependent reduction by NADPH to yield (R)-2,3-dihydroxy-isovalerate. This is Ketol-acid reductoisomerase (NADP(+)) from Mycolicibacterium smegmatis (strain ATCC 700084 / mc(2)155) (Mycobacterium smegmatis).